The following is an 81-amino-acid chain: MNPTVAAASVIAAALAVGLAAIGPGVGQGTASGEAVSGIARQPEAEGRIRGTLLLSLAFMESLTIYGLVIALVLLFANPFA.

The next 2 helical transmembrane spans lie at 5–25 and 57–77; these read VAAA…IGPG and LAFM…LLFA.

This sequence belongs to the ATPase C chain family. In terms of assembly, F-type ATPases have 2 components, F(1) - the catalytic core - and F(0) - the membrane proton channel. F(1) has five subunits: alpha(3), beta(3), gamma(1), delta(1), epsilon(1). F(0) has four main subunits: a(1), b(1), b'(1) and c(10-14). The alpha and beta chains form an alternating ring which encloses part of the gamma chain. F(1) is attached to F(0) by a central stalk formed by the gamma and epsilon chains, while a peripheral stalk is formed by the delta, b and b' chains.

The protein resides in the cellular thylakoid membrane. F(1)F(0) ATP synthase produces ATP from ADP in the presence of a proton or sodium gradient. F-type ATPases consist of two structural domains, F(1) containing the extramembraneous catalytic core and F(0) containing the membrane proton channel, linked together by a central stalk and a peripheral stalk. During catalysis, ATP synthesis in the catalytic domain of F(1) is coupled via a rotary mechanism of the central stalk subunits to proton translocation. In terms of biological role, key component of the F(0) channel; it plays a direct role in translocation across the membrane. A homomeric c-ring of between 10-14 subunits forms the central stalk rotor element with the F(1) delta and epsilon subunits. This chain is ATP synthase subunit c, found in Microcystis aeruginosa (strain NIES-843 / IAM M-2473).